Consider the following 360-residue polypeptide: Photosystem II protein D1 (360 aa).

Helical transmembrane passes span 29–46 (YIGW…TATT), 118–133 (HFLL…QWEL), and 142–156 (WICV…AATA). Histidine 118 serves as a coordination point for chlorophyll a. A pheophytin a-binding site is contributed by tyrosine 126. Positions 170 and 189 each coordinate [CaMn4O5] cluster. Residues 197–218 (FHMLGVAGVFGGSLFSAMHGSL) traverse the membrane as a helical segment. Histidine 198 is a chlorophyll a binding site. A quinone contacts are provided by residues histidine 215 and 264–265 (SF). Histidine 215 lines the Fe cation pocket. Fe cation is bound at residue histidine 272. Residues 274 to 288 (FLGAWPVIGIWFTAM) form a helical membrane-spanning segment. Residues histidine 332, glutamate 333, aspartate 342, and alanine 344 each coordinate [CaMn4O5] cluster. Positions 345 to 360 (SGEQAPVALIAPAING) are excised as a propeptide.

It belongs to the reaction center PufL/M/PsbA/D family. In terms of assembly, PSII is composed of 1 copy each of membrane proteins PsbA, PsbB, PsbC, PsbD, PsbE, PsbF, PsbH, PsbI, PsbJ, PsbK, PsbL, PsbM, PsbT, PsbX, PsbY, PsbZ, Psb30/Ycf12, peripheral proteins PsbO, CyanoQ (PsbQ), PsbU, PsbV and a large number of cofactors. It forms dimeric complexes. It depends on The D1/D2 heterodimer binds P680, chlorophylls that are the primary electron donor of PSII, and subsequent electron acceptors. It shares a non-heme iron and each subunit binds pheophytin, quinone, additional chlorophylls, carotenoids and lipids. D1 provides most of the ligands for the Mn4-Ca-O5 cluster of the oxygen-evolving complex (OEC). There is also a Cl(-1) ion associated with D1 and D2, which is required for oxygen evolution. The PSII complex binds additional chlorophylls, carotenoids and specific lipids. as a cofactor. Tyr-161 forms a radical intermediate that is referred to as redox-active TyrZ, YZ or Y-Z. Post-translationally, C-terminally processed by CtpA; processing is essential to allow assembly of the oxygen-evolving complex and thus photosynthetic growth.

It is found in the cellular thylakoid membrane. It catalyses the reaction 2 a plastoquinone + 4 hnu + 2 H2O = 2 a plastoquinol + O2. In terms of biological role, photosystem II (PSII) is a light-driven water:plastoquinone oxidoreductase that uses light energy to abstract electrons from H(2)O, generating O(2) and a proton gradient subsequently used for ATP formation. It consists of a core antenna complex that captures photons, and an electron transfer chain that converts photonic excitation into a charge separation. The D1/D2 (PsbA/PsbD) reaction center heterodimer binds P680, the primary electron donor of PSII as well as several subsequent electron acceptors. The chain is Photosystem II protein D1 from Microcystis aeruginosa (strain NIES-843 / IAM M-2473).